We begin with the raw amino-acid sequence, 632 residues long: tRNA uridine 5-carboxymethylaminomethyl modification enzyme MnmG (632 aa).

FAD is bound by residues 15-20 (GAGHAG), isoleucine 127, and serine 182. 276–290 (GPRYCPSIEDKIVRF) serves as a coordination point for NAD(+). Glutamine 373 serves as a coordination point for FAD.

This sequence belongs to the MnmG family. Homodimer. Heterotetramer of two MnmE and two MnmG subunits. FAD is required as a cofactor.

Its subcellular location is the cytoplasm. Its function is as follows. NAD-binding protein involved in the addition of a carboxymethylaminomethyl (cmnm) group at the wobble position (U34) of certain tRNAs, forming tRNA-cmnm(5)s(2)U34. The sequence is that of tRNA uridine 5-carboxymethylaminomethyl modification enzyme MnmG from Streptococcus pyogenes serotype M28 (strain MGAS6180).